Here is a 315-residue protein sequence, read N- to C-terminus: THO complex subunit 3 (315 aa).

WD repeat units lie at residues 18–57, 64–104, 106–145, 189–228, 231–270, and 272–311; these read GHKK…HSKA, GHTD…CTQQ, ELSG…PLHR, AHTA…CLRT, KLEW…TVHQ, and PCRA…RIFG.

This sequence belongs to the THOC3 family. Component of the THO complex, which is composed of THO1, THO2, THO3, THO5, THO6 and THO7.

It is found in the nucleus. In terms of biological role, acts as a component of the THO subcomplex of the TREX complex which is thought to couple mRNA transcription, processing and nuclear export. Contributes to the integrity of the endogenous trans-acting small interfering RNA (ta-siRNA) pathway. May process or transport a long RNA molecule so that it can be a template for secondary siRNA production. May participate in the trafficking of siRNA precursors to the ARGONAUTE catalytic center. Required for the generation of functional messenger ribonucleoproteins (mRNPs). This Arabidopsis thaliana (Mouse-ear cress) protein is THO complex subunit 3 (THO3).